We begin with the raw amino-acid sequence, 342 residues long: Alternative oxidase, mitochondrial (342 aa).

A mitochondrion-targeting transit peptide spans 1 to 20 (MIKTYQYRSILNSRNVGIRF). The chain crosses the membrane as a helical span at residues 135–155 (LTRCIFLESVAGVPGMVAAFI). Residues E142, E181, and H184 each contribute to the Fe cation site. A helical membrane pass occupies residues 200–220 (FIIYMGQGVFANLFFLVYLIK). Residues E232, E287, and H290 each contribute to the Fe cation site. 2 stretches are compositionally biased toward basic and acidic residues: residues 308–321 (PFAL…KEQQ) and 330–342 (PHPE…QMRL). Positions 308–342 (PFALKVEDVPKEQQPDEYSLKTPHPEGWNREQMRL) are disordered.

Belongs to the alternative oxidase family. Homodimer; disulfide-linked. The cofactor is Fe cation.

The protein resides in the mitochondrion inner membrane. Functionally, catalyzes cyanide-resistant oxygen consumption. May increase respiration when the cytochrome respiratory pathway is restricted, or in response to low temperatures. The sequence is that of Alternative oxidase, mitochondrial (AOX1) from Wickerhamomyces anomalus (Yeast).